The sequence spans 134 residues: Holo-[acyl-carrier-protein] synthase (134 aa).

Mg(2+) contacts are provided by D8 and E57.

The protein belongs to the P-Pant transferase superfamily. AcpS family. Mg(2+) is required as a cofactor.

The protein localises to the cytoplasm. It catalyses the reaction apo-[ACP] + CoA = holo-[ACP] + adenosine 3',5'-bisphosphate + H(+). Transfers the 4'-phosphopantetheine moiety from coenzyme A to a Ser of acyl-carrier-protein. The sequence is that of Holo-[acyl-carrier-protein] synthase from Roseobacter denitrificans (strain ATCC 33942 / OCh 114) (Erythrobacter sp. (strain OCh 114)).